Here is a 517-residue protein sequence, read N- to C-terminus: Crotonobetaine/carnitine--CoA ligase (517 aa).

The protein belongs to the ATP-dependent AMP-binding enzyme family.

It carries out the reaction 4-(trimethylamino)butanoate + ATP + CoA = 4-(trimethylamino)butanoyl-CoA + AMP + diphosphate. The enzyme catalyses crotonobetaine + ATP + CoA = crotonobetainyl-CoA + AMP + diphosphate. It catalyses the reaction (R)-carnitine + ATP + CoA = (R)-carnitinyl-CoA + AMP + diphosphate. It participates in amine and polyamine metabolism; carnitine metabolism. Its function is as follows. Catalyzes the transfer of CoA to carnitine, generating the initial carnitinyl-CoA needed for the CaiB reaction cycle. Also has activity toward crotonobetaine and gamma-butyrobetaine. This is Crotonobetaine/carnitine--CoA ligase from Salmonella heidelberg (strain SL476).